Reading from the N-terminus, the 93-residue chain is Large ribosomal subunit protein uL23cz/uL23cy (93 aa).

This sequence belongs to the universal ribosomal protein uL23 family. Part of the 50S ribosomal subunit.

The protein localises to the plastid. It is found in the chloroplast. Functionally, binds to 23S rRNA. This chain is Large ribosomal subunit protein uL23cz/uL23cy (rpl23-A), found in Atropa belladonna (Belladonna).